We begin with the raw amino-acid sequence, 223 residues long: Probable GTP-binding protein EngB (223 aa).

Residues 25-199 (TGVEIAFAGR…SRLLQDWFDE (175 aa)) form the EngB-type G domain. Residues 33–40 (GRSNAGKS), 60–64 (GRTQH), 78–81 (DLPG), 145–148 (TKAD), and 178–180 (FSS) contribute to the GTP site. Ser40 and Thr62 together coordinate Mg(2+).

This sequence belongs to the TRAFAC class TrmE-Era-EngA-EngB-Septin-like GTPase superfamily. EngB GTPase family. Mg(2+) is required as a cofactor.

Its function is as follows. Necessary for normal cell division and for the maintenance of normal septation. This is Probable GTP-binding protein EngB from Nitrosomonas eutropha (strain DSM 101675 / C91 / Nm57).